A 121-amino-acid chain; its full sequence is Neuromedin-B (121 aa).

An N-terminal signal peptide occupies residues 1-24; the sequence is MARRAGGARMFGSLLLFALLAAGV. Met56 is subject to Methionine amide. Residues 60 to 121 constitute a propeptide that is removed on maturation; sequence SLEPSSPSPL…RRLLVQILQK (62 aa).

The protein belongs to the bombesin/neuromedin-B/ranatensin family.

The protein resides in the secreted. The protein localises to the cell projection. It is found in the neuron projection. In terms of biological role, stimulates smooth muscle contraction. Induces sighing by acting directly on the pre-Botzinger complex, a cluster of several thousand neurons in the ventrolateral medulla responsible for inspiration during respiratory activity. Contributes to the induction of sneezing following exposure to chemical irritants or allergens which causes release of NMB by nasal sensory neurons and activation of NMBR-expressing neurons in the sneeze-evoking region of the brainstem. These in turn activate neurons of the caudal ventral respiratory group, giving rise to the sneezing response. Contributes to induction of acute itch, possibly through activation of the NMBR receptor on dorsal root ganglion neurons. Increases expression of NMBR and steroidogenic mediators STAR, CYP11A1 and HSD3B1 in Leydig cells, induces secretion of testosterone by Leydig cells and also promotes Leydig cell proliferation. Plays a role in the innate immune response to influenza A virus infection by enhancing interferon alpha expression and reducing expression of IL6. Plays a role in CSF1-induced proliferation of osteoclast precursors by contributing to the positive regulation of the expression of the CSF1 receptor CSF1R. This is Neuromedin-B (NMB) from Homo sapiens (Human).